A 547-amino-acid chain; its full sequence is CTP synthase (547 aa).

Residues 1–269 (MKTKFIFVTG…DQKVAIMLRL (269 aa)) form an amidoligase domain region. Residue serine 14 participates in CTP binding. Serine 14 is a binding site for UTP. Residues 15–20 (SLGKGL) and aspartate 72 each bind ATP. Mg(2+) contacts are provided by aspartate 72 and glutamate 143. CTP is bound by residues 150–152 (DIE), 190–195 (KTKPTQ), and lysine 226. Residues 190–195 (KTKPTQ) and lysine 226 each bind UTP. The Glutamine amidotransferase type-1 domain maps to 294-547 (TVAIVGKYVD…IGAAKKHAKV (254 aa)). Position 356 (glycine 356) interacts with L-glutamine. Cysteine 383 functions as the Nucleophile; for glutamine hydrolysis in the catalytic mechanism. Residues 384-387 (LGMQ), glutamate 407, and arginine 475 contribute to the L-glutamine site. Active-site residues include histidine 520 and glutamate 522.

The protein belongs to the CTP synthase family. Homotetramer.

It carries out the reaction UTP + L-glutamine + ATP + H2O = CTP + L-glutamate + ADP + phosphate + 2 H(+). The catalysed reaction is L-glutamine + H2O = L-glutamate + NH4(+). It catalyses the reaction UTP + NH4(+) + ATP = CTP + ADP + phosphate + 2 H(+). It functions in the pathway pyrimidine metabolism; CTP biosynthesis via de novo pathway; CTP from UDP: step 2/2. Allosterically activated by GTP, when glutamine is the substrate; GTP has no effect on the reaction when ammonia is the substrate. The allosteric effector GTP functions by stabilizing the protein conformation that binds the tetrahedral intermediate(s) formed during glutamine hydrolysis. Inhibited by the product CTP, via allosteric rather than competitive inhibition. In terms of biological role, catalyzes the ATP-dependent amination of UTP to CTP with either L-glutamine or ammonia as the source of nitrogen. Regulates intracellular CTP levels through interactions with the four ribonucleotide triphosphates. The chain is CTP synthase from Desulfovibrio desulfuricans (strain ATCC 27774 / DSM 6949 / MB).